A 1104-amino-acid chain; its full sequence is Translation initiation factor IF-2 (1104 aa).

Disordered stretches follow at residues 51–444 (SLLG…LAAQ) and 461–497 (LARP…RRRA). Composition is skewed to low complexity over residues 60-119 (AKPA…KPQA) and 127-164 (ATPK…AAKP). Positions 189–202 (APTPRPTPARPTPR) are enriched in pro residues. Composition is skewed to low complexity over residues 203–215 (PAGA…PTPG), 227–246 (GAPS…KPGA), 311–336 (STTG…PAGM), and 366–396 (PTKA…SFRP). A compositionally biased stretch (basic and acidic residues) spans 406–420 (GRPDWDDSARLDALR). The segment covering 481–495 (MRKRKKETARQRQRR) has biased composition (basic residues). The 173-residue stretch at 596 to 768 (RRPPVVTVMG…LLLVTEVEDL (173 aa)) folds into the tr-type G domain. A G1 region spans residues 605–612 (GHVDHGKT). 605 to 612 (GHVDHGKT) lines the GTP pocket. The interval 630 to 634 (GITQH) is G2. Residues 655–658 (DTPG) are G3. Residues 655 to 659 (DTPGH) and 709 to 712 (NKID) each bind GTP. Residues 709-712 (NKID) form a G4 region. The interval 745–747 (SAI) is G5.

The protein belongs to the TRAFAC class translation factor GTPase superfamily. Classic translation factor GTPase family. IF-2 subfamily.

It is found in the cytoplasm. One of the essential components for the initiation of protein synthesis. Protects formylmethionyl-tRNA from spontaneous hydrolysis and promotes its binding to the 30S ribosomal subunits. Also involved in the hydrolysis of GTP during the formation of the 70S ribosomal complex. This is Translation initiation factor IF-2 from Synechococcus sp. (strain CC9605).